Here is a 149-residue protein sequence, read N- to C-terminus: Transcriptional regulator MraZ (149 aa).

2 consecutive SpoVT-AbrB domains span residues 7 to 54 (KYVN…GISH) and 83 to 126 (AVQL…QPQN).

The protein belongs to the MraZ family. As to quaternary structure, forms oligomers.

It is found in the cytoplasm. The protein resides in the nucleoid. In Rickettsia conorii (strain ATCC VR-613 / Malish 7), this protein is Transcriptional regulator MraZ.